We begin with the raw amino-acid sequence, 56 residues long: Small ribosomal subunit protein bS21 (56 aa).

It belongs to the bacterial ribosomal protein bS21 family.

The sequence is that of Small ribosomal subunit protein bS21 (rpsU) from Geobacillus stearothermophilus (Bacillus stearothermophilus).